Reading from the N-terminus, the 98-residue chain is NADH-ubiquinone oxidoreductase chain 4L (98 aa).

3 consecutive transmembrane segments (helical) span residues 1–21 (MSLV…GLLM), 29–49 (SLLC…IMVL), and 61–81 (IILL…LVMV).

This sequence belongs to the complex I subunit 4L family. Core subunit of respiratory chain NADH dehydrogenase (Complex I) which is composed of 45 different subunits.

The protein resides in the mitochondrion inner membrane. It catalyses the reaction a ubiquinone + NADH + 5 H(+)(in) = a ubiquinol + NAD(+) + 4 H(+)(out). Core subunit of the mitochondrial membrane respiratory chain NADH dehydrogenase (Complex I) which catalyzes electron transfer from NADH through the respiratory chain, using ubiquinone as an electron acceptor. Part of the enzyme membrane arm which is embedded in the lipid bilayer and involved in proton translocation. This chain is NADH-ubiquinone oxidoreductase chain 4L (MT-ND4L), found in Pseudosoriculus fumidus (Taiwanese brown-toothed shrew).